The primary structure comprises 321 residues: Probable membrane-associated kinase regulator 3 (321 aa).

Residues 297–314 (KSNVTESELCSSRTSVST) are compositionally biased toward polar residues. The segment at 297–321 (KSNVTESELCSSRTSVSTCGDLDKD) is disordered.

The protein localises to the cell membrane. The polypeptide is Probable membrane-associated kinase regulator 3 (MAKR3) (Arabidopsis thaliana (Mouse-ear cress)).